The following is a 135-amino-acid chain: Endoribonuclease YbeY (135 aa).

Zn(2+) contacts are provided by His-94, His-98, and His-104.

This sequence belongs to the endoribonuclease YbeY family. Requires Zn(2+) as cofactor.

The protein resides in the cytoplasm. Single strand-specific metallo-endoribonuclease involved in late-stage 70S ribosome quality control and in maturation of the 3' terminus of the 16S rRNA. The sequence is that of Endoribonuclease YbeY from Campylobacter jejuni subsp. jejuni serotype O:2 (strain ATCC 700819 / NCTC 11168).